Consider the following 644-residue polypeptide: DNA mismatch repair protein MutL (644 aa).

2 disordered regions span residues 338–390 and 416–445; these read RPNA…ERPA and QPQEAAEEAAGTPAPPASSSPAMAETDDTQ. 2 stretches are compositionally biased toward low complexity: residues 349 to 366 and 416 to 427; these read EATPSTDATTATAAEASA and QPQEAAEEAAGT.

Belongs to the DNA mismatch repair MutL/HexB family.

This protein is involved in the repair of mismatches in DNA. It is required for dam-dependent methyl-directed DNA mismatch repair. May act as a 'molecular matchmaker', a protein that promotes the formation of a stable complex between two or more DNA-binding proteins in an ATP-dependent manner without itself being part of a final effector complex. In Chromohalobacter salexigens (strain ATCC BAA-138 / DSM 3043 / CIP 106854 / NCIMB 13768 / 1H11), this protein is DNA mismatch repair protein MutL.